A 1561-amino-acid polypeptide reads, in one-letter code: Rho GTPase-activating protein 190 (1561 aa).

4 FF domains span residues 252 to 320 (YQES…HMKK), 365 to 419 (YLQN…YLNS), 426 to 480 (KIGW…HQDD), and 482 to 547 (IEKS…HLRF). The region spanning 592-765 (SGSDRTLNLL…EPYPSNHTDL (174 aa)) is the pG1 pseudoGTPase domain. The pG2 pseudoGTPase domain maps to 766-926 (RILCCIFCGD…LKTAWDNKYE (161 aa)). 5 positions are modified to phosphoserine: Ser973, Ser975, Ser985, Ser988, and Ser996. The segment at 1054–1074 (KIRPKGPSQTLKVGEAPSRNC) is disordered. Residues 1349–1552 (AQFGKLMITS…TMIDQFPYLF (204 aa)) form the Rho-GAP domain.

Negatively regulated by integrin, bsk and Src/Src64B. Functionally, GTPase-activating protein (GAP) for RhoA/Rho1 that plays an essential role in the stability of dorsal branches of mushroom body (MB) neurons. The MB neurons are the center for olfactory learning and memory. Acts by converting RhoA/Rho1 to an inactive GDP-bound state, leading to repress the RhoA/Rho1-Drok-MRLC signaling pathway thereby maintaining axon branch stability. This Drosophila melanogaster (Fruit fly) protein is Rho GTPase-activating protein 190 (RhoGAPp190).